A 347-amino-acid polypeptide reads, in one-letter code: NADH-ubiquinone oxidoreductase chain 2 (347 aa).

Transmembrane regions (helical) follow at residues 13-33 (IFAGTLITALSSHWFFTWVGL), 56-76 (AIKYFLTQATASMILLMAILF), 96-116 (LMIMMAMAMKLGMAPFHFWVP), 123-143 (PLTSGLLLLTWQKLAPISIMY), 149-169 (LNVSLLLTLSILSIMAGSWGG), 178-198 (ILAYSSITHMGWMMAVLPYNP), 201-221 (TILNLTIYIILTTTAFLLLNL), 247-267 (TLLSLGGLPPLTGFLPKWAII), 274-294 (NSLIIPTIMATITLLNLYFYL), and 326-346 (LPTLIALTTLLLPISPFMLMI).

Belongs to the complex I subunit 2 family. In terms of assembly, core subunit of respiratory chain NADH dehydrogenase (Complex I) which is composed of 45 different subunits. Interacts with TMEM242.

Its subcellular location is the mitochondrion inner membrane. It catalyses the reaction a ubiquinone + NADH + 5 H(+)(in) = a ubiquinol + NAD(+) + 4 H(+)(out). Functionally, core subunit of the mitochondrial membrane respiratory chain NADH dehydrogenase (Complex I) which catalyzes electron transfer from NADH through the respiratory chain, using ubiquinone as an electron acceptor. Essential for the catalytic activity and assembly of complex I. The protein is NADH-ubiquinone oxidoreductase chain 2 of Homo sapiens (Human).